The chain runs to 115 residues: Chondroitin proteoglycan 8 (115 aa).

Positions Met-1–Ala-16 are cleaved as a signal peptide. Residues Val-33–Val-96 form a disordered region. O-linked (Xyl...) (chondroitin sulfate) serine glycans are attached at residues Ser-61, Ser-63, Ser-84, Ser-88, and Ser-109.

This chain is Chondroitin proteoglycan 8, found in Caenorhabditis elegans.